Here is a 144-residue protein sequence, read N- to C-terminus: MGRFISVSFGLLVVFLSLSGTGADCPSEWSSHEGHCYKVFKLLKTWEDAEKFCTEQKKGSHLVSLHSREEEKFVVNLISENLEYPATWIGLGNMWKDCRMEWSDRGNVKYKALAEESYCLIMITHEKVWKSMTCNFIAPVVCKF.

Residues 1-23 form the signal peptide; it reads MGRFISVSFGLLVVFLSLSGTGA. 3 cysteine pairs are disulfide-bonded: C25–C36, C53–C142, and C119–C134. The 112-residue stretch at 32–143 folds into the C-type lectin domain; sequence HEGHCYKVFK…CNFIAPVVCK (112 aa).

This sequence belongs to the snaclec family. Heterodimer; disulfide-linked.

The protein localises to the secreted. Functionally, interferes with one step of hemostasis (modulation of platelet aggregation, or coagulation cascade, for example). The chain is Snaclec 6 from Daboia siamensis (Eastern Russel's viper).